A 119-amino-acid chain; its full sequence is Large ribosomal subunit protein bL20 (119 aa).

It belongs to the bacterial ribosomal protein bL20 family.

In terms of biological role, binds directly to 23S ribosomal RNA and is necessary for the in vitro assembly process of the 50S ribosomal subunit. It is not involved in the protein synthesizing functions of that subunit. This chain is Large ribosomal subunit protein bL20, found in Streptococcus pyogenes serotype M1.